A 321-amino-acid chain; its full sequence is Arabinan endo-1,5-alpha-L-arabinosidase A (321 aa).

Positions 1-19 are cleaved as a signal peptide; sequence MYSLLTALSVPLLAGLAHG. D34 functions as the Proton acceptor in the catalytic mechanism. N-linked (GlcNAc...) asparagine glycosylation occurs at N192. Residue E200 is the Proton donor of the active site.

Belongs to the glycosyl hydrolase 43 family.

It is found in the secreted. It carries out the reaction Endohydrolysis of (1-&gt;5)-alpha-arabinofuranosidic linkages in (1-&gt;5)-arabinans.. It participates in glycan metabolism; L-arabinan degradation. Its function is as follows. Endo-1,5-alpha-L-arabinanase involved in degradation of pectin. Its preferred substrate is linear 1,5-alpha-L-arabinan. This is Arabinan endo-1,5-alpha-L-arabinosidase A (abnA) from Aspergillus aculeatus.